The following is a 324-amino-acid chain: Casein kinase I (324 aa).

Residues 9–278 form the Protein kinase domain; the sequence is YALGKKLGSG…LRRLLKDLFI (270 aa). ATP contacts are provided by residues 15–23 and lysine 38; that span reads LGSGSFGDI. Aspartate 128 (proton acceptor) is an active-site residue.

It belongs to the protein kinase superfamily. CK1 Ser/Thr protein kinase family. Casein kinase I subfamily. In terms of assembly, interacts with rhoptry protein RON3; the interaction is direct. Interacts with CK2alpha; the interaction is direct. Interacts with nucleosome assembly protein NAPL. Interacts with RAB5b. Interacts with host GAPVD1. Interacts with host SNX22. It depends on Mg(2+) as a cofactor.

The protein resides in the cytoplasm. It is found in the cytoplasmic vesicle. Its subcellular location is the secretory vesicle. The protein localises to the microneme. It localises to the secreted. The protein resides in the host cell surface. It catalyses the reaction L-seryl-[protein] + ATP = O-phospho-L-seryl-[protein] + ADP + H(+). The catalysed reaction is L-threonyl-[protein] + ATP = O-phospho-L-threonyl-[protein] + ADP + H(+). In terms of biological role, serine/threonine-protein kinase likely to be involved in many cellular processes. Phosphorylates rhoptry protein RON3, nucleosome assembly protein NAPL and DNA/RNA-binding protein ALBA4 in vitro. The protein is Casein kinase I of Plasmodium falciparum (isolate Dd2).